A 456-amino-acid polypeptide reads, in one-letter code: UDP-glycosyltransferase 84B1 (456 aa).

Residues serine 278, 332–334 (SPQ), 349–357 (HCGWNSTME), and 371–374 (WTDQ) each bind UDP-alpha-D-glucose.

It belongs to the UDP-glycosyltransferase family.

Its function is as follows. Possesses low quercetin 7-O-glucosyltransferase activity in vitro. The polypeptide is UDP-glycosyltransferase 84B1 (UGT84B1) (Arabidopsis thaliana (Mouse-ear cress)).